Consider the following 659-residue polypeptide: RNA-binding E3 ubiquitin-protein ligase MEX3C (659 aa).

The segment covering 1-15 has biased composition (low complexity); sequence MPSGSSAALALAAAP. The disordered stretch occupies residues 1–140; the sequence is MPSGSSAALA…EEAEEEDRSS (140 aa). A compositionally biased stretch (pro residues) spans 16 to 37; it reads APLPQPPPPPPPPPPPLPPPSG. Residues 64–82 are compositionally biased toward low complexity; the sequence is EPGAPALRAPAAAAQGQAR. Residues 83–94 show a composition bias toward basic and acidic residues; it reads RAAELSPEERAP. Phosphoserine is present on Ser-88. Residues 104 to 137 show a composition bias toward acidic residues; sequence AELELEEDEEEGEEAELDGDLLEEEELEEAEEED. KH domains are found at residues 232–293 and 326–387; these read TTEC…KREI and QTTV…REEI. Positions 513 to 569 are disordered; the sequence is FEPVNPLSGFGSDPSGNMKTQRRGSQPSTPRLSPTFPESIEHPLARRVRSDPPSTGN. Polar residues predominate over residues 526–544; sequence PSGNMKTQRRGSQPSTPRL. Phosphoserine occurs at positions 537 and 545. Residues 551–562 show a composition bias toward basic and acidic residues; that stretch reads SIEHPLARRVRS. The RING-type zinc-finger motif lies at 608 to 648; sequence CVICFENEVIAALVPCGHNLFCMECANKICEKRTPSCPVCQ.

In terms of assembly, interacts with USP7, which antagonizes the ability to degrade mRNA. As to expression, highest levels found in fetal brain and testis. Also expressed in thymus, salivary gland and uterus. Highly expressed in cells of the innate immune system, in particular activated NK cells. Week expression in the intestine.

The protein resides in the cytoplasm. Its subcellular location is the nucleus. The catalysed reaction is S-ubiquitinyl-[E2 ubiquitin-conjugating enzyme]-L-cysteine + [acceptor protein]-L-lysine = [E2 ubiquitin-conjugating enzyme]-L-cysteine + N(6)-ubiquitinyl-[acceptor protein]-L-lysine.. Functionally, E3 ubiquitin ligase responsible for the post-transcriptional regulation of common HLA-A allotypes. Binds to the 3' UTR of HLA-A2 mRNA, and regulates its levels by promoting mRNA decay. RNA binding is sufficient to prevent translation, but ubiquitin ligase activity is required for mRNA degradation. This is RNA-binding E3 ubiquitin-protein ligase MEX3C (MEX3C) from Homo sapiens (Human).